A 447-amino-acid chain; its full sequence is tRNA-2-methylthio-N(6)-dimethylallyladenosine synthase (447 aa).

Residues 1-116 enclose the MTTase N-terminal domain; the sequence is MYIRTFGCQM…LPDLIKRRRA (116 aa). [4Fe-4S] cluster-binding residues include cysteine 8, cysteine 45, cysteine 79, cysteine 153, cysteine 157, and cysteine 160. The Radical SAM core domain maps to 139–372; that stretch reads RVDGATAFVS…QALINQQAAA (234 aa). Residues 375–438 form the TRAM domain; it reads QGMIGTRQRV…TNSLRGRVAG (64 aa).

It belongs to the methylthiotransferase family. MiaB subfamily. Monomer. The cofactor is [4Fe-4S] cluster.

Its subcellular location is the cytoplasm. It catalyses the reaction N(6)-dimethylallyladenosine(37) in tRNA + (sulfur carrier)-SH + AH2 + 2 S-adenosyl-L-methionine = 2-methylsulfanyl-N(6)-dimethylallyladenosine(37) in tRNA + (sulfur carrier)-H + 5'-deoxyadenosine + L-methionine + A + S-adenosyl-L-homocysteine + 2 H(+). Functionally, catalyzes the methylthiolation of N6-(dimethylallyl)adenosine (i(6)A), leading to the formation of 2-methylthio-N6-(dimethylallyl)adenosine (ms(2)i(6)A) at position 37 in tRNAs that read codons beginning with uridine. The polypeptide is tRNA-2-methylthio-N(6)-dimethylallyladenosine synthase (Bordetella pertussis (strain Tohama I / ATCC BAA-589 / NCTC 13251)).